Consider the following 162-residue polypeptide: RNA pyrophosphohydrolase (162 aa).

The Nudix hydrolase domain occupies 7–149 (KYRPCVGIML…KKEVYKTVIE (143 aa)). Positions 40–61 (GGVDDGEELEQAALRELLEEVG) match the Nudix box motif.

The protein belongs to the Nudix hydrolase family. RppH subfamily. Requires a divalent metal cation as cofactor.

Functionally, accelerates the degradation of transcripts by removing pyrophosphate from the 5'-end of triphosphorylated RNA, leading to a more labile monophosphorylated state that can stimulate subsequent ribonuclease cleavage. The chain is RNA pyrophosphohydrolase from Wolbachia sp. subsp. Drosophila simulans (strain wRi).